We begin with the raw amino-acid sequence, 113 residues long: Small ribosomal subunit protein bS18 (113 aa).

The tract at residues 1 to 41 is disordered; sequence MSEEKIVNTEAAPEAVAERPARAERSERPERPAKGPFGKKR. The span at 16–33 shows a compositional bias: basic and acidic residues; sequence VAERPARAERSERPERPA.

The protein belongs to the bacterial ribosomal protein bS18 family. In terms of assembly, part of the 30S ribosomal subunit. Forms a tight heterodimer with protein bS6.

Its function is as follows. Binds as a heterodimer with protein bS6 to the central domain of the 16S rRNA, where it helps stabilize the platform of the 30S subunit. This is Small ribosomal subunit protein bS18 from Elusimicrobium minutum (strain Pei191).